The chain runs to 253 residues: CD151 antigen (253 aa).

The Cytoplasmic segment spans residues 1–18; that stretch reads MGEFNEKKATCGTVCLKY. S-palmitoyl cysteine attachment occurs at residues C11 and C15. Residues 19–39 traverse the membrane as a helical segment; sequence LLFTYNCCFWLAGLAVMAVGI. Residues 40-57 lie on the Extracellular side of the membrane; it reads WTLALKSDYISLLASSTY. Residues 58 to 78 traverse the membrane as a helical segment; sequence LATAYILVVAGVVVMVTGVLG. Over 79–91 the chain is Cytoplasmic; sequence CCATFKERRNLLR. A helical transmembrane segment spans residues 92 to 112; sequence LYFILLLIIFLLEIIAGILAY. Over 113–221 the chain is Extracellular; the sequence is VYYQQLNTEL…LETFIQEHLR (109 aa). An N-linked (GlcNAc...) asparagine glycan is attached at N159. A helical transmembrane segment spans residues 222–242; the sequence is VIGAVGIGIACVQVFGMIFTC. S-palmitoyl cysteine attachment occurs at residues C242 and C243. At 243-253 the chain is on the cytoplasmic side; that stretch reads CLYRSLKLEHY.

The protein belongs to the tetraspanin (TM4SF) family. In terms of assembly, interacts with integrins ITGA3:ITGB1, ITGA5:ITGB1, ITGA3:ITGB1 and ITGA6:ITGB4 and with CD9 and CD181. Interacts (via the second extracellular domain) with integrin ITGAV:ITGB3. Interacts with ITGA3; this interaction modulates ITGA3 glycosylation pattern. Interacts with F11R. Interacts with RAC1 and CDC42; these interactions mediate physical association of RAC1 and CDC42 with integrin adhesion receptor complexes. In terms of processing, palmitoylated. Palmitoylation by ZDHHC2 regulates CD151 expression, association with other tetraspanin family proteins and function in cell adhesion. Post-translationally, ubiquitinated by RNF128 on lysine residues present in the tetraspanin amino terminus via 'Lys-48'-linked ubiquitin leading to proteasomal degradation.

It is found in the cell membrane. Structural component of specialized membrane microdomains known as tetraspanin-enriched microdomains (TERMs), which act as platforms for receptor clustering and signaling. Plays a role in various cellular and molecular mechanism through its association with both integrin and non-integrin proteins. These interactions facilitate critical cellular functions, including cell-to-cell communication, wound healing, platelet aggregation, trafficking, cell motility, and angiogenesis. Via interaction with JAM-A/F11R and integrin ITGA3:ITGB1, promotes the recruitment of signaling molecules such as RAC1, CDC42 and RhoGTPases to facilitate the polarization of epithelial cells and the reorganization of the actin cytoskeleton, which are critical steps in cell migration process. Regulates the glycosylation pattern of ITGA3:ITGB1 thereby modulating its activity. Plays an essential role in the maintenance of central laminin-binding integrin ITGA6:ITGB4-containing adhesion complexes. Essential for the proper assembly of the glomerular and tubular basement membranes in kidney. Contributes to T-cell activation by modulating integrin signaling leading to activation of downstream targets PTK2 and MAPK1/MAPK3. This is CD151 antigen (Cd151) from Mus musculus (Mouse).